A 362-amino-acid chain; its full sequence is 3-dehydroquinate synthase (362 aa).

NAD(+)-binding positions include 71-76 (DGEQYK), 105-109 (GVIGD), 129-130 (TT), lysine 142, lysine 151, and 169-172 (CLKT). The Zn(2+) site is built by glutamate 184, histidine 247, and histidine 264.

It belongs to the sugar phosphate cyclases superfamily. Dehydroquinate synthase family. It depends on Co(2+) as a cofactor. Zn(2+) serves as cofactor. The cofactor is NAD(+).

The protein resides in the cytoplasm. It carries out the reaction 7-phospho-2-dehydro-3-deoxy-D-arabino-heptonate = 3-dehydroquinate + phosphate. It participates in metabolic intermediate biosynthesis; chorismate biosynthesis; chorismate from D-erythrose 4-phosphate and phosphoenolpyruvate: step 2/7. Catalyzes the conversion of 3-deoxy-D-arabino-heptulosonate 7-phosphate (DAHP) to dehydroquinate (DHQ). The protein is 3-dehydroquinate synthase of Salmonella schwarzengrund (strain CVM19633).